The chain runs to 213 residues: Leucine-rich repeat protein 1 (213 aa).

A signal peptide spans 1–21; that stretch reads MGAGALGVVAMVAAAVVVAMA. LRR repeat units lie at residues 90-113, 115-137, 138-161, and 163-186; these read DHLQ…LGNL, NLIS…LGKL, TSLV…LAGI, and SLKV…PFEH.

As to quaternary structure, interacts with HIR1.

The protein resides in the early endosome membrane. It localises to the late endosome membrane. The protein localises to the cell membrane. In terms of biological role, involved in plant defense response. The chain is Leucine-rich repeat protein 1 from Oryza sativa subsp. indica (Rice).